The chain runs to 201 residues: Probable phosphopantothenoylcysteine decarboxylase (201 aa).

Residues 20–22, 45–47, 98–101, and alanine 132 each bind FMN; these read GSV, SKS, and SANT. Residues asparagine 134 and 164–166 each bind substrate; that span reads KLA. The active-site Proton donor is cysteine 167. Position 175 (methionine 175) interacts with substrate.

This sequence belongs to the HFCD (homooligomeric flavin containing Cys decarboxylase) superfamily. As to quaternary structure, homotrimer. FMN serves as cofactor. Expressed in roots, shoots, leaves, flowers, developing siliques and seeds.

The enzyme catalyses N-[(R)-4-phosphopantothenoyl]-L-cysteine + H(+) = (R)-4'-phosphopantetheine + CO2. It participates in cofactor biosynthesis; coenzyme A biosynthesis; CoA from (R)-pantothenate: step 3/5. Its function is as follows. Involved in plant growth and salt and osmotic tolerance. Catalyzes the decarboxylation of 4'-phosphopantothenoylcysteine to 4'-phosphopantetheine, a key step in coenzyme A biosynthesis. The enzyme is also able to decarboxylate pantothenoylcysteine to pantothenoylcysteamine. The polypeptide is Probable phosphopantothenoylcysteine decarboxylase (HAL3B) (Arabidopsis thaliana (Mouse-ear cress)).